Reading from the N-terminus, the 469-residue chain is Signal recognition particle 54 kDa protein (469 aa).

GTP-binding positions include 104-111, 184-188, and 242-245; these read GLYGSGKT, DTAGR, and TKLD. Disordered regions lie at residues 388-410 and 447-469; these read ELEN…SGKP and QQGG…PFGD. Gly residues predominate over residues 448–469; sequence QGGGGGGGMGGMGGGGMGPFGD.

This sequence belongs to the GTP-binding SRP family. SRP54 subfamily. In terms of assembly, part of the signal recognition particle protein translocation system, which is composed of SRP and FtsY. Archaeal SRP consists of a 7S RNA molecule of 300 nucleotides and two protein subunits: SRP54 and SRP19.

Its subcellular location is the cytoplasm. The enzyme catalyses GTP + H2O = GDP + phosphate + H(+). Its function is as follows. Involved in targeting and insertion of nascent membrane proteins into the cytoplasmic membrane. Binds to the hydrophobic signal sequence of the ribosome-nascent chain (RNC) as it emerges from the ribosomes. The SRP-RNC complex is then targeted to the cytoplasmic membrane where it interacts with the SRP receptor FtsY. This chain is Signal recognition particle 54 kDa protein, found in Haloarcula marismortui (strain ATCC 43049 / DSM 3752 / JCM 8966 / VKM B-1809) (Halobacterium marismortui).